We begin with the raw amino-acid sequence, 257 residues long: MLSKRILPCLDVKAGRVVKGVNFVDLKDAGDPVELAKVYNDAGADELVFLDITATHEDRDTIIDVVYRTAEQVFIPLTVGGGIQSLENVKALLRAGADKVSINSAAVRDPELIDRASDRFGNQCIVVAIDARRRVDPSNPGWDVYVRGGRENTGLDALSWAKEVEKRGAGELLVTSMDADGTQAGYDLELTRAIAESVEIPVIASGGAGNCEHIYTALTEGKAEAALLASLLHYGQLSVAEIKNYLRDCQVPVRLYA.

Active-site residues include Asp11 and Asp130.

Belongs to the HisA/HisF family. Heterodimer of HisH and HisF.

Its subcellular location is the cytoplasm. It carries out the reaction 5-[(5-phospho-1-deoxy-D-ribulos-1-ylimino)methylamino]-1-(5-phospho-beta-D-ribosyl)imidazole-4-carboxamide + L-glutamine = D-erythro-1-(imidazol-4-yl)glycerol 3-phosphate + 5-amino-1-(5-phospho-beta-D-ribosyl)imidazole-4-carboxamide + L-glutamate + H(+). Its pathway is amino-acid biosynthesis; L-histidine biosynthesis; L-histidine from 5-phospho-alpha-D-ribose 1-diphosphate: step 5/9. In terms of biological role, IGPS catalyzes the conversion of PRFAR and glutamine to IGP, AICAR and glutamate. The HisF subunit catalyzes the cyclization activity that produces IGP and AICAR from PRFAR using the ammonia provided by the HisH subunit. The chain is Imidazole glycerol phosphate synthase subunit HisF from Trichormus variabilis (strain ATCC 29413 / PCC 7937) (Anabaena variabilis).